The sequence spans 160 residues: uncharacterized protein (160 aa).

One can recognise an HTH marR-type domain in the interval 20 to 152 (EREIWVLYMK…VYEGLSILSR (133 aa)). Residues 66–89 (VSDIAEKMGASLSNTTGLLDRLEK) constitute a DNA-binding region (H-T-H motif).

This is an uncharacterized protein from Bacillus subtilis (strain 168).